We begin with the raw amino-acid sequence, 2213 residues long: Sortilin-related receptor (2213 aa).

A signal peptide spans Met1–Cys28. A propeptide spans Glu29–Arg81 (removed in mature form). A Cell attachment site motif is present at residues Arg63 to Asp65. The Lumenal segment spans residues Ser82–Ala2136. An N-linked (GlcNAc...) asparagine glycan is attached at Asn99. At Ser114 the chain carries Phosphoserine. The BNR 1 repeat unit spans residues Tyr136 to Lys147. N-linked (GlcNAc...) asparagine glycosylation occurs at Asn158. One copy of the BNR 2 repeat lies at Trp232–Met243. Asn368 and Asn430 each carry an N-linked (GlcNAc...) asparagine glycan. BNR repeat units follow at residues Val441–Phe452, Tyr521–Glu532, and Lys562–Ala573. 4 N-linked (GlcNAc...) asparagine glycosylation sites follow: Asn616, Asn674, Asn817, and Asn870. 5 LDL-receptor class B repeats span residues Asn799–Ser842, Gln843–Glu886, Gly887–Asp929, Gln930–Glu971, and Ile972–Gly1012. One can recognise an EGF-like domain in the interval Cys1025–Val1071. N-linked (GlcNAc...) asparagine glycans are attached at residues Asn1034 and Asn1067. 9 LDL-receptor class A domains span residues Asp1075–Thr1113, Thr1114–Met1154, His1155–Ala1193, His1196–Glu1235, Lys1237–Glu1271, Pro1272–Arg1316, Lys1322–Asn1360, Pro1365–Asp1404, and Ser1416–Ser1454. 21 disulfides stabilise this stretch: Cys1077–Cys1089, Cys1084–Cys1102, Cys1096–Cys1111, Cys1116–Cys1130, Cys1124–Cys1143, Cys1137–Cys1152, Cys1157–Cys1169, Cys1164–Cys1182, Cys1176–Cys1191, Cys1198–Cys1210, Cys1205–Cys1223, Cys1217–Cys1234, Cys1238–Cys1248, Cys1243–Cys1261, Cys1255–Cys1270, Cys1274–Cys1288, Cys1282–Cys1301, Cys1295–Cys1314, Cys1324–Cys1336, Cys1331–Cys1349, and Cys1343–Cys1358. N-linked (GlcNAc...) asparagine glycosylation is present at Asn1163. A glycan (N-linked (GlcNAc...) asparagine) is linked at Asn1190. N-linked (GlcNAc...) asparagine glycosylation occurs at Asn1245. N-linked (GlcNAc...) asparagine glycosylation occurs at Asn1366. 6 cysteine pairs are disulfide-bonded: Cys1367–Cys1380, Cys1375–Cys1393, Cys1387–Cys1402, Cys1418–Cys1430, Cys1425–Cys1443, and Cys1437–Cys1452. Residue Asn1457 is glycosylated (N-linked (GlcNAc...) asparagine). LDL-receptor class A domains follow at residues Gly1468 to Thr1507 and Leu1511 to Asp1550. Cystine bridges form between Cys1470-Cys1483, Cys1477-Cys1496, Cys1490-Cys1505, Cys1513-Cys1526, Cys1520-Cys1539, and Cys1533-Cys1548. Fibronectin type-III domains are found at residues Lys1556–Gly1648, Ala1652–Gly1744, Pro1748–Pro1843, Pro1842–Met1926, Pro1933–Ala2028, and Leu2029–Glu2117. Asn1569, Asn1607, Asn1705, Asn1732, Asn1808, Asn1853, Asn1893, Asn1985, Asn2009, Asn2053, Asn2068, Asn2075, and Asn2091 each carry an N-linked (GlcNAc...) asparagine glycan. The helical transmembrane segment at Ala2137–Leu2157 threads the bilayer. The Cytoplasmic portion of the chain corresponds to Tyr2158–Ala2213. Positions Lys2160 to Arg2163 match the Potential nuclear localization signal for the C-terminal fragment generated by PSEN1 motif. Residues Phe2171–Tyr2176 carry the Endocytosis signal motif. Positions Asp2189–Ala2213 are required for efficient Golgi apparatus - endosome sorting. The tract at residues Met2200–Ala2213 is required for interaction with GGA1 and GGA2. Ser2205 carries the post-translational modification Phosphoserine; by ROCK2. The DXXLL motif involved in the interaction with GGA1 signature appears at Asp2207 to Val2211.

This sequence belongs to the VPS10-related sortilin family. SORL1 subfamily. In terms of assembly, after maturation cleavage, interacts (via N-terminus) with its own propeptide; this interaction prevents interaction with other ligands, including CRLF1, GDNF, GFRA1, IL6 and IL6R. Interacts (via N-terminal ectodomain) with APP, forming a 1:1 stoichiometric complex; this interaction retains APP in the trans-Golgi network and reduces processing into soluble APP-alpha and amyloid-beta peptides. Also interacts with APP C-terminal fragment C99 and with Abeta40. Interacts with beta-secretase BACE1/BACE; this interaction may affect BACE1-binding to APP and hence reduce BACE1-dependent APP cleavage. Interacts with LRPAP1/RAP. Interacts (via C-terminal cytosolic domain) with GGA1 and GGA2 (via N-terminal VHS domain). Interacts with PACS1. May interact (via the N-terminal ectodomain) with the morphogenetic neuropeptide, also called head activator or HA; this interaction is impaired in the presence of propeptide. Interacts with neurotensin/NTS. Interacts (via the N-terminal ectodomain) with PDGFB homodimer. Interacts (via N-terminal ectodomain) with the uPA receptor PLAUR. Interacts with uPA/PLAU and PAI1/SERPINE1, either individually or in complex with each other, leading to endocytosis. Also interacts with PAI1/SERPINE1 in complex with tPA/PLAT. Interacts (via C-terminus) with AP-1 and AP-2 complexes. Interacts with BMPR1A and BMPR1B. Interacts with lipoprotein lipase LPL; this interaction is optimal in slightly acidic conditions. Interacts (via N-terminal ectodomain) with GDNF (via propeptide) and GDNF receptor alpha-1/GFRA1, either individually or in complex with each other. The interaction with GDNF occurs mostly intracellularly. Also interacts with other GDNF receptor alpha family members, including GFRA2, GFRA3 and GFRA4. Interacts with the insulin receptor INSR; this interaction strongly increases the surface exposure of INSR. Interacts (via cytosolic C-terminus) with STK39/SPAK. Interacts (via N-terminal ectodomain) with the heterodimeric complex CRLF1-CLC; within this complex, the interaction is mediated predominantly by the CRLF1 moiety. Interacts with CNTFR, as well as with the tripartite signaling complex formed by CRLF1, CLC and CNTFR. Interacts (via N-terminal ectodomain) with IL6; this interaction leads to IL6 internalization and lysosomal degradation. Binding of SOLRL1 secreted N-terminal ectodomain to IL6 may increase IL6 trans signaling. Interacts with secreted IL6R; this interaction leads to IL6R internalization. Also interacts with transmembrane IL6R; this interaction does not affect subcellular location. Interacts with APOE. Interacts with apolipoprotein E-rich beta-VLDL. Interacts with APOA5; this interaction leads to APOA5 internalization and is abolished by heparin. Interaction with APOA5 results in enhanced binding to chylomicrons. Interacts with ROCK2. Interacts (via cytosolic C-terminus) with PPP3CB/calcineurin A beta. Interacts with NTRK2/TRKB; this interaction facilitates NTRK2 trafficking between synaptic plasma membranes, postsynaptic densities and cell soma, hence positively regulates BDNF signaling. Interacts (via cytosolic C-terminus) with HSPA12A in an ADP-dependent manner; this interaction affects SORL1 internalization and subcellular localization. Interacts (via N-terminal ectodomain) with ERBB2/HER2. Post-translationally, within the Golgi apparatus, the propeptide may be cleaved off by FURIN or a furin-like protease. After cleavage, the propeptide interacts with the mature protein N-terminus, preventing the association with other ligands. At the cell surface, partially subjected to proteolytic shedding that releases the ectodomain in the extracellular milieu. The shedding may be catalyzed by ADAM17/TACE. Following shedding, PSEN1/presenilin-1 cleaves the remaining transmembrane fragment and catalyzes the release of a C-terminal fragment in the cytosol and of a soluble N-terminal beta fragment in the extracellular milieu. The C-terminal cytosolic fragment localizes to the nucleus. In terms of processing, phosphorylation at Ser-2205 facilitates the interaction with GGA1. In terms of tissue distribution, expressed in brain, in particular the hippocampus, dentate gyrus, and cerebral cortex (at protein level). Also detected in liver, adrenal glands, pancreas and testis. Expressed in smooth muscle cells, predominantly during proliferation.

It localises to the golgi apparatus membrane. Its subcellular location is the golgi apparatus. The protein resides in the trans-Golgi network membrane. The protein localises to the endosome membrane. It is found in the early endosome membrane. It localises to the recycling endosome membrane. Its subcellular location is the endoplasmic reticulum membrane. The protein resides in the endosome. The protein localises to the multivesicular body membrane. It is found in the cell membrane. It localises to the cytoplasmic vesicle. Its subcellular location is the secretory vesicle membrane. The protein resides in the secreted. In terms of biological role, sorting receptor that directs several proteins to their correct location within the cell. Along with AP-1 complex, involved Golgi apparatus - endosome sorting. Sorting receptor for APP, regulating its intracellular trafficking and processing into amyloidogenic-beta peptides. Retains APP in the trans-Golgi network, hence preventing its transit through late endosomes where amyloid beta peptides Abeta40 and Abeta42 are generated. May also sort newly produced amyloid-beta peptides to lysosomes for catabolism. Does not affect APP trafficking from the endoplasmic reticulum to Golgi compartments. Sorting receptor for the BDNF receptor NTRK2/TRKB that facilitates NTRK2 trafficking between synaptic plasma membranes, postsynaptic densities and cell soma, hence positively regulates BDNF signaling by controlling the intracellular location of its receptor. Sorting receptor for GDNF that promotes GDNF regulated, but not constitutive secretion. Sorting receptor for the GDNF-GFRA1 complex, directing it from the cell surface to endosomes. GDNF is then targeted to lysosomes and degraded, while its receptor GFRA1 recycles back to the cell membrane, resulting in a GDNF clearance pathway. The SORL1-GFRA1 complex further targets RET for endocytosis, but not for degradation, affecting GDNF-induced neurotrophic activities. Sorting receptor for ERBB2/HER2. Regulates ERBB2 subcellular distribution by promoting its recycling after internalization from endosomes back to the plasma membrane, hence stimulating phosphoinositide 3-kinase (PI3K)-dependent ERBB2 signaling. Sorting receptor for lipoprotein lipase LPL. Promotes LPL localization to endosomes and later to the lysosomes, leading to degradation of newly synthesized LPL. Potential sorting receptor for APOA5, inducing APOA5 internalization to early endosomes, then to late endosomes, wherefrom a portion is sent to lysosomes and degradation, another portion is sorted to the trans-Golgi network. Sorting receptor for the insulin receptor INSR. Promotes recycling of internalized INSR via the Golgi apparatus back to the cell surface, thereby preventing lysosomal INSR catabolism, increasing INSR cell surface expression and strengthening insulin signal reception in adipose tissue. Does not affect INSR internalization. Plays a role in renal ion homeostasis, controlling the phospho-regulation of SLC12A1/NKCC2 by STK39/SPAK kinase and PPP3CB/calcineurin A beta phosphatase, possibly through intracellular sorting of STK39 and PPP3CB. Stimulates, via the N-terminal ectodomain, the proliferation and migration of smooth muscle cells, possibly by increasing cell surface expression of the urokinase receptor uPAR/PLAUR. This may promote extracellular matrix proteolysis and hence facilitate cell migration. By acting on the migration of intimal smooth muscle cells, may accelerate intimal thickening following vascular injury. Promotes adhesion of monocytes. Stimulates proliferation and migration of monocytes/macrophages. Through its action on intimal smooth muscle cells and macrophages, may accelerate intimal thickening and macrophage foam cell formation in the process of atherosclerosis. Regulates hypoxia-enhanced adhesion of hematopoietic stem and progenitor cells to the bone marrow stromal cells via a PLAUR-mediated pathway. This function is mediated by the N-terminal ectodomain. Metabolic regulator, which functions to maintain the adequate balance between lipid storage and oxidation in response to changing environmental conditions, such as temperature and diet. The N-terminal ectodomain negatively regulates adipose tissue energy expenditure, acting through the inhibition the BMP/Smad pathway. May regulate signaling by the heterodimeric neurotrophic cytokine CLCF1-CRLF1 bound to the CNTFR receptor by promoting the endocytosis of the tripartite complex CLCF1-CRLF1-CNTFR and lysosomal degradation. May regulate IL6 signaling, decreasing cis signaling, possibly by interfering with IL6-binding to membrane-bound IL6R, while up-regulating trans signaling via soluble IL6R. This chain is Sortilin-related receptor (SORL1), found in Oryctolagus cuniculus (Rabbit).